The sequence spans 177 residues: Large ribosomal subunit protein uL6 (177 aa).

Belongs to the universal ribosomal protein uL6 family. In terms of assembly, part of the 50S ribosomal subunit.

Its function is as follows. This protein binds to the 23S rRNA, and is important in its secondary structure. It is located near the subunit interface in the base of the L7/L12 stalk, and near the tRNA binding site of the peptidyltransferase center. This is Large ribosomal subunit protein uL6 from Methylobacillus flagellatus (strain ATCC 51484 / DSM 6875 / VKM B-1610 / KT).